Consider the following 261-residue polypeptide: Probable membrane transporter protein ORF9 (261 aa).

Transmembrane regions (helical) follow at residues Leu-8 to Gly-28, Gly-29 to Gly-49, Leu-78 to Val-98, Gly-100 to Leu-120, Val-133 to Gly-151, Val-152 to Phe-171, Val-189 to Met-209, and Ile-231 to Pro-251.

It belongs to the 4-toluene sulfonate uptake permease (TSUP) (TC 2.A.102) family.

Its subcellular location is the cell membrane. This Sinorhizobium sp protein is Probable membrane transporter protein ORF9.